Consider the following 364-residue polypeptide: Putative agmatine deiminase 1 (364 aa).

Catalysis depends on cysteine 356, which acts as the Amidino-cysteine intermediate.

Belongs to the agmatine deiminase family.

The enzyme catalyses agmatine + H2O = N-carbamoylputrescine + NH4(+). In Listeria monocytogenes serotype 4b (strain F2365), this protein is Putative agmatine deiminase 1.